The chain runs to 447 residues: MTMTPREIVAELDKFIIGQNDAKRAVAIALRNRWRRMQLGEELRREIFPKNILMIGPTGVGKTEIARRLSDLAGAPFLKIEATKFTEVGYVGRDVESIIRDLVDVAVKMTREKAIRQVKSLAEEAAEERVLDALIPPARGGFQGEPTAEEKPTEKKESATRQLFRKKLRNGGLDDKEIEVEVSAHPSFEIMGPPGMEEMVSQLQGIMSSMSSRRSKSRRLKVKDALRILGEEEAAKLVDEDQIKSTALASVEQNGIVFIDEIDKIVKRDGAVGADVSREGVQRDLLPLVEGSTVFTKYGMVKTDHILFIASGAFHIAKPSDLVPELQGRFPIRVELKALTADDFVRILTEPKASLTEQYTELLKTENFGLSFTKDGIKRLAEIAYQVNDRSENIGARRLHTIMERLLEEVSFEATDKQGESITIDADYVNKQLKKLAEDEDLSRYIL.

ATP contacts are provided by residues isoleucine 17 and 59 to 64 (GVGKTE). The segment at 136–160 (PPARGGFQGEPTAEEKPTEKKESAT) is disordered. The segment covering 148-159 (AEEKPTEKKESA) has biased composition (basic and acidic residues). Residues aspartate 260, glutamate 325, and arginine 397 each coordinate ATP.

The protein belongs to the ClpX chaperone family. HslU subfamily. As to quaternary structure, a double ring-shaped homohexamer of HslV is capped on each side by a ring-shaped HslU homohexamer. The assembly of the HslU/HslV complex is dependent on binding of ATP.

The protein localises to the cytoplasm. ATPase subunit of a proteasome-like degradation complex; this subunit has chaperone activity. The binding of ATP and its subsequent hydrolysis by HslU are essential for unfolding of protein substrates subsequently hydrolyzed by HslV. HslU recognizes the N-terminal part of its protein substrates and unfolds these before they are guided to HslV for hydrolysis. The polypeptide is ATP-dependent protease ATPase subunit HslU (Coxiella burnetii (strain Dugway 5J108-111)).